Consider the following 266-residue polypeptide: MLTIFAVSDSIGETAQQVAMAAASQFKDNAEVKRIPYVKSLEDVEDLIKTIEDCEACMIVSTIITVNVREYLTQKCIEKNINIINVLGPIINVASTILNKYPDYNPGAMWNTDETYYKRIEAMEFAMQYDDSKDYRGLKNADVVLVGLSRTSKTPLCMYLANKGIKAINIPLVPEVGVPEELYEIDKKKIFGLTINPLQLIEIRKRRLDKFHRISADIEYASDSRILEEFEFADKILRKIGCRTIDVTQRAIEDTALIIMEKLGVK.

147–154 contributes to the ADP binding site; it reads GLSRTSKT.

It belongs to the pyruvate, phosphate/water dikinase regulatory protein family. PDRP subfamily.

It carries out the reaction N(tele)-phospho-L-histidyl/L-threonyl-[pyruvate, phosphate dikinase] + ADP = N(tele)-phospho-L-histidyl/O-phospho-L-threonyl-[pyruvate, phosphate dikinase] + AMP + H(+). The catalysed reaction is N(tele)-phospho-L-histidyl/O-phospho-L-threonyl-[pyruvate, phosphate dikinase] + phosphate + H(+) = N(tele)-phospho-L-histidyl/L-threonyl-[pyruvate, phosphate dikinase] + diphosphate. In terms of biological role, bifunctional serine/threonine kinase and phosphorylase involved in the regulation of the pyruvate, phosphate dikinase (PPDK) by catalyzing its phosphorylation/dephosphorylation. This is Putative pyruvate, phosphate dikinase regulatory protein from Clostridium perfringens (strain SM101 / Type A).